Reading from the N-terminus, the 216-residue chain is Ras-related protein Rab11A (216 aa).

Residues 19-27 (GDSGVGKSN), 38-44 (CLESKST), 67-71 (DTAGQ), 125-128 (NKSD), and 155-157 (SAL) contribute to the GTP site. The short motif at 41–49 (SKSTIGVEF) is the Effector region element. Residues Cys213 and Cys214 are each lipidated (S-geranylgeranyl cysteine).

This sequence belongs to the small GTPase superfamily. Rab family.

The protein localises to the cell membrane. In Nicotiana tabacum (Common tobacco), this protein is Ras-related protein Rab11A (RAB11A).